Consider the following 284-residue polypeptide: Small ribosomal subunit protein uS5y/uS5u/uS5v (284 aa).

Positions 1-19 (MAERGGESGAERGGDRGDF) are enriched in basic and acidic residues. The disordered stretch occupies residues 1-51 (MAERGGESGAERGGDRGDFGRGFGGGRGGGRGRDRGPRGRGRRGGRASEET). Over residues 20–29 (GRGFGGGRGG) the composition is skewed to gly residues. In terms of domain architecture, S5 DRBM spans 95-158 (LKDEVMKIMP…ILAKLSVVPV (64 aa)).

It belongs to the universal ribosomal protein uS5 family.

The chain is Small ribosomal subunit protein uS5y/uS5u/uS5v (RPS2B) from Arabidopsis thaliana (Mouse-ear cress).